The sequence spans 350 residues: Inactive ADP-ribosyltransferase arh2 (350 aa).

It belongs to the ADP-ribosylglycohydrolase family.

Its subcellular location is the cytoplasm. The protein resides in the myofibril. The protein localises to the sarcomere. Functionally, required for myofibril assembly and outgrowth of the cardiac chambers in the developing heart. Appears to be catalytically inactive, showing no activity against O-acetyl-ADP-ribose. This chain is Inactive ADP-ribosyltransferase arh2 (adprhl1), found in Danio rerio (Zebrafish).